The chain runs to 617 residues: DNA double-strand break repair protein Mre11 (617 aa).

4 residues coordinate Mn(2+): Asp12, His14, Asp53, and Asn88. His89 (proton donor) is an active-site residue. Mn(2+)-binding residues include His158, Asp189, and His191. The span at 395-432 shows a compositional bias: low complexity; sequence SPVDPSSSVSSIESSGSVSPIDSVSTVSPSSPSSSAII. 2 disordered regions span residues 395 to 437 and 513 to 617; these read SPVD…EPEE and VEDE…GDYL. Residues 529–547 show a composition bias toward polar residues; it reads APQSSSPVSFSDNSQTGFS. Low complexity predominate over residues 549–559; it reads ISPPESIPSPE. Basic and acidic residues predominate over residues 560 to 583; that stretch reads ILKENSEADADEKPVDGKLSEEKP.

This sequence belongs to the MRE11/RAD32 family. In terms of assembly, homodimer. Forms a heterotetramer composed of two Mre11 subunits and two Rad50 subunits. It depends on Mn(2+) as a cofactor.

With respect to regulation, nuclease activity is regulated by Rad50. Part of the Rad50/Mre11 complex, which is involved in the early steps of DNA double-strand break (DSB) repair. The complex may facilitate opening of the processed DNA ends to aid in the recruitment of HerA and NurA. Mre11 binds to DSB ends and has both double-stranded 3'-5' exonuclease activity and single-stranded endonuclease activity. The protein is DNA double-strand break repair protein Mre11 of Methanosarcina mazei (strain ATCC BAA-159 / DSM 3647 / Goe1 / Go1 / JCM 11833 / OCM 88) (Methanosarcina frisia).